The primary structure comprises 388 residues: Protein-glutamate methylesterase/protein-glutamine glutaminase 4 (388 aa).

Residues 4-121 enclose the Response regulatory domain; it reads KVLVVDDSGF…SGDASKIKRL (118 aa). Position 55 is a 4-aspartylphosphate (aspartate 55). The disordered stretch occupies residues 137–196; it reads SGASAPASVPQPAKPAAPIPVREPPKPAAPVTRPAEPRAKAPPAKPEPKPEVKAAKSRRT. A compositionally biased stretch (pro residues) spans 148–164; that stretch reads PAKPAAPIPVREPPKPA. Residues 197–388 enclose the CheB-type methylesterase domain; it reads PRQDYKVVLI…FAPRLIDGVG (192 aa). Active-site residues include serine 209, histidine 236, and aspartate 332.

This sequence belongs to the CheB family. In terms of processing, phosphorylated by CheA. Phosphorylation of the N-terminal regulatory domain activates the methylesterase activity.

It is found in the cytoplasm. It carries out the reaction [protein]-L-glutamate 5-O-methyl ester + H2O = L-glutamyl-[protein] + methanol + H(+). It catalyses the reaction L-glutaminyl-[protein] + H2O = L-glutamyl-[protein] + NH4(+). Its function is as follows. Involved in chemotaxis. Part of a chemotaxis signal transduction system that modulates chemotaxis in response to various stimuli. Catalyzes the demethylation of specific methylglutamate residues introduced into the chemoreceptors (methyl-accepting chemotaxis proteins or MCP) by CheR. Also mediates the irreversible deamidation of specific glutamine residues to glutamic acid. The sequence is that of Protein-glutamate methylesterase/protein-glutamine glutaminase 4 from Hahella chejuensis (strain KCTC 2396).